A 101-amino-acid chain; its full sequence is uncharacterized protein (101 aa).

The first 25 residues, 1–25, serve as a signal peptide directing secretion; sequence MRKKRLLSRISFSSLFLLCGTLLSA. C26 is lipidated: N-palmitoyl cysteine. Residue C26 is the site of S-diacylglycerol cysteine attachment.

This sequence belongs to the MG439/MG440 family.

It is found in the cell membrane. This is an uncharacterized protein from Mycoplasma pneumoniae (strain ATCC 29342 / M129 / Subtype 1) (Mycoplasmoides pneumoniae).